We begin with the raw amino-acid sequence, 563 residues long: ATP-dependent RNA helicase DeaD (563 aa).

Positions 13–41 (ATFADLQIHPRVLRAIGDVGYESPTAIQA) match the Q motif motif. The region spanning 44–215 (IPALMAGSDV…AKYLHDPFEV (172 aa)) is the Helicase ATP-binding domain. 57 to 64 (AQTGTGKT) lines the ATP pocket. A DEAD box motif is present at residues 163–166 (DEAD). The 160-residue stretch at 226-385 (NISQSYIQVA…AQLPTVEDVN (160 aa)) folds into the Helicase C-terminal domain. 2 disordered regions span residues 441 to 470 (LMAP…PDLT) and 543 to 563 (YRPP…KHVG). The segment covering 451 to 461 (RNRDQRRDRPQ) has biased composition (basic and acidic residues). The span at 551–563 (RHNGGKPRRKHVG) shows a compositional bias: basic residues.

The protein belongs to the DEAD box helicase family. DeaD/CsdA subfamily.

The protein localises to the cytoplasm. The enzyme catalyses ATP + H2O = ADP + phosphate + H(+). Its function is as follows. DEAD-box RNA helicase involved in various cellular processes at low temperature, including ribosome biogenesis, mRNA degradation and translation initiation. The sequence is that of ATP-dependent RNA helicase DeaD from Mycobacterium tuberculosis (strain CDC 1551 / Oshkosh).